The primary structure comprises 106 residues: ATP-dependent Clp protease adapter protein ClpS (106 aa).

It belongs to the ClpS family. Binds to the N-terminal domain of the chaperone ClpA.

In terms of biological role, involved in the modulation of the specificity of the ClpAP-mediated ATP-dependent protein degradation. The polypeptide is ATP-dependent Clp protease adapter protein ClpS (Pseudoalteromonas atlantica (strain T6c / ATCC BAA-1087)).